Consider the following 160-residue polypeptide: GTP-dependent dephospho-CoA kinase (160 aa).

GTP is bound by residues Asp-45, Ile-46, Val-47, Asp-59, Lys-61, Glu-108, and Asp-130.

Belongs to the GTP-dependent DPCK family.

It catalyses the reaction 3'-dephospho-CoA + GTP = GDP + CoA + H(+). Its pathway is cofactor biosynthesis; coenzyme A biosynthesis. Functionally, catalyzes the GTP-dependent phosphorylation of the 3'-hydroxyl group of dephosphocoenzyme A to form coenzyme A (CoA). The sequence is that of GTP-dependent dephospho-CoA kinase from Staphylothermus marinus (strain ATCC 43588 / DSM 3639 / JCM 9404 / F1).